A 211-amino-acid polypeptide reads, in one-letter code: Large ribosomal subunit protein uL3 (211 aa).

It belongs to the universal ribosomal protein uL3 family. Part of the 50S ribosomal subunit. Forms a cluster with proteins L14 and L19.

Functionally, one of the primary rRNA binding proteins, it binds directly near the 3'-end of the 23S rRNA, where it nucleates assembly of the 50S subunit. The sequence is that of Large ribosomal subunit protein uL3 from Geobacter sp. (strain M21).